Reading from the N-terminus, the 275-residue chain is Large ribosomal subunit protein uL2 (275 aa).

The disordered stretch occupies residues 218 to 275; it reads RPQTRGSAMNPIDHPHGGGEGKTNSGRHPVSPWGMPTKGYKTRKKKASDKLIISKRKK. A compositionally biased stretch (basic residues) spans 257-275; it reads YKTRKKKASDKLIISKRKK.

It belongs to the universal ribosomal protein uL2 family. Part of the 50S ribosomal subunit. Forms a bridge to the 30S subunit in the 70S ribosome.

Functionally, one of the primary rRNA binding proteins. Required for association of the 30S and 50S subunits to form the 70S ribosome, for tRNA binding and peptide bond formation. It has been suggested to have peptidyltransferase activity; this is somewhat controversial. Makes several contacts with the 16S rRNA in the 70S ribosome. This is Large ribosomal subunit protein uL2 from Sulfurovum sp. (strain NBC37-1).